Consider the following 221-residue polypeptide: Glutathione S-transferase 1 (221 aa).

Positions 7 to 88 (QKMQLYSFSL…YLEEKFPENP (82 aa)) constitute a GST N-terminal domain. Glutathione contacts are provided by residues 17-22 (SSCAWR), Val60, 72-73 (DS), Gln112, and 116-118 (NLA). Residues 93-221 (DLQKRALNYQ…ISPMLDEAKS (129 aa)) form the GST C-terminal domain.

Belongs to the GST superfamily. Zeta family.

It catalyses the reaction RX + glutathione = an S-substituted glutathione + a halide anion + H(+). Conjugation of reduced glutathione to a wide number of exogenous and endogenous hydrophobic electrophiles. The polypeptide is Glutathione S-transferase 1 (GST1) (Dianthus caryophyllus (Carnation)).